Consider the following 347-residue polypeptide: D-alanine--D-alanine ligase (347 aa).

Positions 131 to 333 (KRVLESAGIA…YPELIERLVD (203 aa)) constitute an ATP-grasp domain. 161-216 (EEKLAYPVFTKPSNMGSSVGISKSENQEELRQALKLAFRYDSRVLVEQGVNAREIE) is a binding site for ATP. Residues aspartate 287, glutamate 300, and asparagine 302 each contribute to the Mg(2+) site.

This sequence belongs to the D-alanine--D-alanine ligase family. The cofactor is Mg(2+). Mn(2+) serves as cofactor.

The protein resides in the cytoplasm. The enzyme catalyses 2 D-alanine + ATP = D-alanyl-D-alanine + ADP + phosphate + H(+). The protein operates within cell wall biogenesis; peptidoglycan biosynthesis. Functionally, cell wall formation. In Streptococcus pneumoniae (strain ATCC BAA-255 / R6), this protein is D-alanine--D-alanine ligase.